A 218-amino-acid polypeptide reads, in one-letter code: Thiamine-phosphate synthase (218 aa).

4-amino-2-methyl-5-(diphosphooxymethyl)pyrimidine is bound by residues 36–40 and aspartate 70; that span reads QVRSK. Positions 71 and 94 each coordinate Mg(2+). Threonine 113 contacts 4-amino-2-methyl-5-(diphosphooxymethyl)pyrimidine. 141–143 is a 2-[(2R,5Z)-2-carboxy-4-methylthiazol-5(2H)-ylidene]ethyl phosphate binding site; the sequence is TPT. Residue lysine 144 participates in 4-amino-2-methyl-5-(diphosphooxymethyl)pyrimidine binding.

Belongs to the thiamine-phosphate synthase family. It depends on Mg(2+) as a cofactor.

It carries out the reaction 2-[(2R,5Z)-2-carboxy-4-methylthiazol-5(2H)-ylidene]ethyl phosphate + 4-amino-2-methyl-5-(diphosphooxymethyl)pyrimidine + 2 H(+) = thiamine phosphate + CO2 + diphosphate. The catalysed reaction is 2-(2-carboxy-4-methylthiazol-5-yl)ethyl phosphate + 4-amino-2-methyl-5-(diphosphooxymethyl)pyrimidine + 2 H(+) = thiamine phosphate + CO2 + diphosphate. The enzyme catalyses 4-methyl-5-(2-phosphooxyethyl)-thiazole + 4-amino-2-methyl-5-(diphosphooxymethyl)pyrimidine + H(+) = thiamine phosphate + diphosphate. It functions in the pathway cofactor biosynthesis; thiamine diphosphate biosynthesis; thiamine phosphate from 4-amino-2-methyl-5-diphosphomethylpyrimidine and 4-methyl-5-(2-phosphoethyl)-thiazole: step 1/1. In terms of biological role, condenses 4-methyl-5-(beta-hydroxyethyl)thiazole monophosphate (THZ-P) and 2-methyl-4-amino-5-hydroxymethyl pyrimidine pyrophosphate (HMP-PP) to form thiamine monophosphate (TMP). This chain is Thiamine-phosphate synthase, found in Corynebacterium jeikeium (strain K411).